The sequence spans 31 residues: Photosystem II reaction center protein T (31 aa).

The chain crosses the membrane as a helical span at residues 3-23 (SVAYIIVLAMALSVLFFAIAF).

The protein belongs to the PsbT family. PSII is composed of 1 copy each of membrane proteins PsbA, PsbB, PsbC, PsbD, PsbE, PsbF, PsbH, PsbI, PsbJ, PsbK, PsbL, PsbM, PsbT, PsbX, PsbY, PsbZ, Psb30/Ycf12, peripheral proteins PsbO, CyanoQ (PsbQ), PsbU, PsbV and a large number of cofactors. It forms dimeric complexes.

It localises to the cellular thylakoid membrane. In terms of biological role, found at the monomer-monomer interface of the photosystem II (PS II) dimer, plays a role in assembly and dimerization of PSII. PSII is a light-driven water plastoquinone oxidoreductase, using light energy to abstract electrons from H(2)O, generating a proton gradient subsequently used for ATP formation. This chain is Photosystem II reaction center protein T, found in Picosynechococcus sp. (strain ATCC 27264 / PCC 7002 / PR-6) (Agmenellum quadruplicatum).